The sequence spans 237 residues: Keratin-associated protein 5-5 (237 aa).

A run of 8 repeats spans residues 62-65, 68-71, 74-77, 159-162, 178-181, 188-191, 198-201, and 227-230. Residues 62-230 are 8 X 4 AA repeats of C-C-X-P; that stretch reads CCVPVCCCKP…CCCQSSCCVP (169 aa).

It belongs to the KRTAP type 5 family. Interacts with hair keratins. As to expression, restricted to hair root, not detected in any other tissues.

In terms of biological role, in the hair cortex, hair keratin intermediate filaments are embedded in an interfilamentous matrix, consisting of hair keratin-associated protein (KRTAP), which are essential for the formation of a rigid and resistant hair shaft through their extensive disulfide bond cross-linking with abundant cysteine residues of hair keratins. The matrix proteins include the high-sulfur and high-glycine-tyrosine keratins. This Homo sapiens (Human) protein is Keratin-associated protein 5-5 (KRTAP5-5).